Reading from the N-terminus, the 677-residue chain is Fermitin family homolog 1 (677 aa).

One can recognise an FERM domain in the interval 96 to 653; that stretch reads MLRLRLPNLK…HEYIGGYIFL (558 aa). Phosphoserine occurs at positions 170, 179, and 361. Positions 337-433 constitute a PH domain; sequence ESEVDEIEAA…EVVPNVNVAE (97 aa).

The protein belongs to the kindlin family. In terms of assembly, interacts with the cytoplasmic domain of integrins ITGB1 and ITGB3.

Its subcellular location is the cytoplasm. It localises to the cytoskeleton. The protein localises to the cell junction. The protein resides in the focal adhesion. It is found in the cell projection. Its subcellular location is the ruffle membrane. Its function is as follows. Involved in cell adhesion. Contributes to integrin activation. When coexpressed with talin, potentiates activation of ITGA2B. Required for normal keratinocyte proliferation. Required for normal polarization of basal keratinocytes in skin, and for normal cell shape. Required for normal adhesion of keratinocytes to fibronectin and laminin, and for normal keratinocyte migration to wound sites. The chain is Fermitin family homolog 1 (FERMT1) from Pongo abelii (Sumatran orangutan).